The sequence spans 392 residues: Chorismate synthase (392 aa).

The NADP(+) site is built by arginine 40 and arginine 46. FMN is bound by residues 135–137, 256–257, glycine 300, 315–319, and arginine 341; these read RAS, QA, and KPIST.

The protein belongs to the chorismate synthase family. Homotetramer. Requires FMNH2 as cofactor.

It carries out the reaction 5-O-(1-carboxyvinyl)-3-phosphoshikimate = chorismate + phosphate. The protein operates within metabolic intermediate biosynthesis; chorismate biosynthesis; chorismate from D-erythrose 4-phosphate and phosphoenolpyruvate: step 7/7. Functionally, catalyzes the anti-1,4-elimination of the C-3 phosphate and the C-6 proR hydrogen from 5-enolpyruvylshikimate-3-phosphate (EPSP) to yield chorismate, which is the branch point compound that serves as the starting substrate for the three terminal pathways of aromatic amino acid biosynthesis. This reaction introduces a second double bond into the aromatic ring system. This Acidothermus cellulolyticus (strain ATCC 43068 / DSM 8971 / 11B) protein is Chorismate synthase.